A 128-amino-acid polypeptide reads, in one-letter code: Head peptide (128 aa).

The signal sequence occupies residues 1-22; sequence MWKFASIVVLVVCLAWAVYCED. Glutamine 23 carries the post-translational modification Pyrrolidone carboxylic acid. Residue proline 26 is modified to Hydroxyproline; partial. Residues 27–128 form a disordered region; it reads SLKTRFGRSA…GRANKKRAAN (102 aa). Phenylalanine 32 bears the Phenylalanine amide mark. The propeptide occupies 35-55; that stretch reads SADEPESDNYVSNDIMEKRSA. At glutamine 56 the chain carries Pyrrolidone carboxylic acid. Proline 59 carries the post-translational modification Hydroxyproline; partial. Phenylalanine 65 carries the phenylalanine amide modification. The segment covering 66 to 78 has biased composition (basic and acidic residues); sequence GRSEGAEVMEKRS. The propeptide occupies 68–79; the sequence is SEGAEVMEKRSA. Residue glutamine 80 is modified to Pyrrolidone carboxylic acid. Position 83 is a hydroxyproline; partial (proline 83). At phenylalanine 89 the chain carries Phenylalanine amide. Residues 92–128 constitute a propeptide that is removed on maturation; sequence SVANPESDGYMRKRSAESEPFVTRIRHGRANKKRAAN. Over residues 115–128 the composition is skewed to basic residues; that stretch reads RIRHGRANKKRAAN.

Belongs to the NPY family. In terms of tissue distribution, expressed in the brain, terminal ganglion, and midgut of adults: numerous neurosecretory cells and midgut endocrine cells. Expression is dynamic depending on reproductive cycle.

The protein localises to the secreted. Has a role in inhibiting host-seeking behavior during a reproductive cycle. This is Head peptide from Aedes aegypti (Yellowfever mosquito).